Consider the following 507-residue polypeptide: MATIRADEISKIIRERIEGYNREVKVVNTGTVLQVGDGIARIHGLDEVMAGELVEFEEGTIGIALNLESNNVGVVLMGDGLMIQEGSSVKATGRIAQIPVSEAYLGRVINALAKPIDGRGEITASESRLIESPAPGIMSRRSVYEPLQTGLIAIDAMIPVGRGQRELIIGDRQTGKTAVATDTILNQQGQNVICVYVAIGQKASSVAQVVTNFQERGAMEYTIVVAETADSPATLQYLAPYTGAALAEYFMYRERHTLIIYDDLSKQAQAYRQMSLLLRRPPGREAYPGDVFYLHSRLLERAAKLSSLLGEGSMTALPIVETQAGDVSAYIPTNVISITDGQIFLSADLFNAGIRPAINVGISVSRVGSAAQIKAMKKVAGKLKLELAQFAELEAFAQFASDLDKATQNQLARGQRLRELLKQPQSAPLTVEEQVMTIYTGTNGYLDSLELDQVRKYLVELRTYVKTNKPEFQEIISSTKTFTEEAEALLKEAIQEQMERFLLQEQA.

170–177 (GDRQTGKT) contributes to the ATP binding site.

It belongs to the ATPase alpha/beta chains family. F-type ATPases have 2 components, CF(1) - the catalytic core - and CF(0) - the membrane proton channel. CF(1) has five subunits: alpha(3), beta(3), gamma(1), delta(1), epsilon(1). CF(0) has four main subunits: a, b, b' and c.

It is found in the plastid. The protein localises to the chloroplast thylakoid membrane. The catalysed reaction is ATP + H2O + 4 H(+)(in) = ADP + phosphate + 5 H(+)(out). Functionally, produces ATP from ADP in the presence of a proton gradient across the membrane. The alpha chain is a regulatory subunit. The protein is ATP synthase subunit alpha, chloroplastic of Spinacia oleracea (Spinach).